A 341-amino-acid chain; its full sequence is Phosphate acyltransferase (341 aa).

It belongs to the PlsX family. As to quaternary structure, homodimer. Probably interacts with PlsY.

It is found in the cytoplasm. It catalyses the reaction a fatty acyl-[ACP] + phosphate = an acyl phosphate + holo-[ACP]. The protein operates within lipid metabolism; phospholipid metabolism. Functionally, catalyzes the reversible formation of acyl-phosphate (acyl-PO(4)) from acyl-[acyl-carrier-protein] (acyl-ACP). This enzyme utilizes acyl-ACP as fatty acyl donor, but not acyl-CoA. In Vibrio atlanticus (strain LGP32) (Vibrio splendidus (strain Mel32)), this protein is Phosphate acyltransferase.